A 337-amino-acid chain; its full sequence is Ribonucleoside-diphosphate reductase small chain (337 aa).

Residues aspartate 85, glutamate 116, and histidine 119 each coordinate Fe cation. Tyrosine 123 is a catalytic residue. Fe cation is bound by residues glutamate 178, glutamate 212, and histidine 215.

The protein belongs to the ribonucleoside diphosphate reductase small chain family. As to quaternary structure, heterodimer of a large and a small subunit. The cofactor is Fe cation.

It catalyses the reaction a 2'-deoxyribonucleoside 5'-diphosphate + [thioredoxin]-disulfide + H2O = a ribonucleoside 5'-diphosphate + [thioredoxin]-dithiol. Provides the precursors necessary for DNA synthesis. Catalyzes the biosynthesis of deoxyribonucleotides from the corresponding ribonucleotides. This chain is Ribonucleoside-diphosphate reductase small chain (RNR2), found in Trypanosoma brucei brucei.